We begin with the raw amino-acid sequence, 382 residues long: Secreted triacylglycerol lipase LIP5 (382 aa).

Residues C40 and C211 are joined by a disulfide bond. An N-linked (GlcNAc...) asparagine glycan is attached at N115. The active-site Nucleophile is S124. Residues N157 and N232 are each glycosylated (N-linked (GlcNAc...) asparagine). Catalysis depends on residues D271 and H305. N346 carries N-linked (GlcNAc...) asparagine glycosylation.

It belongs to the AB hydrolase superfamily. Lipase family. Class Lip subfamily.

Its subcellular location is the secreted. The enzyme catalyses a triacylglycerol + H2O = a diacylglycerol + a fatty acid + H(+). It catalyses the reaction a monoacylglycerol + H2O = glycerol + a fatty acid + H(+). The catalysed reaction is a diacylglycerol + H2O = a monoacylglycerol + a fatty acid + H(+). In terms of biological role, secreted lipase that hydrolyzes acylglycerol lipids such as triacylglycerols and consequently releases free fatty acid. Can hydrolyze 4-nitrophenyl palmitate to release 4-nitrophenol and palmitoic acid. Due to an absence of fatty acid synthase genes in Malassezia species, secretory lipases are essential for the yeast to generate free fatty acids from degradation of sebum and assimilate them as lipid sources for growth. Plays important roles not only in lipid metabolism but also in the immune response of host cells and pathogenesis. In Malassezia furfur (Pityriasis versicolor infection agent), this protein is Secreted triacylglycerol lipase LIP5.